A 341-amino-acid polypeptide reads, in one-letter code: Cytochrome c biogenesis protein CcsA (341 aa).

8 helical membrane passes run 16 to 36, 37 to 57, 68 to 88, 97 to 117, 142 to 162, 249 to 269, 276 to 296, and 310 to 330; these read LILLLTMLIYWAGAAFPGMSI, LPTLGTAGVAIANLSIATLLG, LSNLYESLFFLAWGVTAVHLI, LVGVVTTPVAMGITAFAALSL, VMMLSYATLMVGAVLAIAFLI, IIGLGFPLLTIGIIAGAVWAN, WSWDPKETWALITWLVFAAYL, and AILAASGFIVVWVCYLGVNLL.

Belongs to the CcmF/CycK/Ccl1/NrfE/CcsA family. May interact with ccs1.

The protein resides in the cellular thylakoid membrane. Its function is as follows. Required during biogenesis of c-type cytochromes (cytochrome c6 and cytochrome f) at the step of heme attachment. In Rippkaea orientalis (strain PCC 8801 / RF-1) (Cyanothece sp. (strain PCC 8801)), this protein is Cytochrome c biogenesis protein CcsA.